We begin with the raw amino-acid sequence, 304 residues long: tRNA dimethylallyltransferase (304 aa).

16–23 (GPTASGKS) provides a ligand contact to ATP. 18–23 (TASGKS) is a binding site for substrate. Interaction with substrate tRNA regions lie at residues 41 to 44 (DSMQ) and 165 to 169 (QRIIR).

The protein belongs to the IPP transferase family. In terms of assembly, monomer. Requires Mg(2+) as cofactor.

It catalyses the reaction adenosine(37) in tRNA + dimethylallyl diphosphate = N(6)-dimethylallyladenosine(37) in tRNA + diphosphate. Its function is as follows. Catalyzes the transfer of a dimethylallyl group onto the adenine at position 37 in tRNAs that read codons beginning with uridine, leading to the formation of N6-(dimethylallyl)adenosine (i(6)A). In Allorhizobium ampelinum (strain ATCC BAA-846 / DSM 112012 / S4) (Agrobacterium vitis (strain S4)), this protein is tRNA dimethylallyltransferase.